The sequence spans 235 residues: Histidine/lysine/arginine/ornithine transport system permease protein HisM (235 aa).

Topologically, residues 1–26 are periplasmic; sequence MIEIIQEYWKSLLWTDGYRFTGVAIT. The ABC transmembrane type-1 domain occupies 23-221; that stretch reads VAITLWLLIS…LISYVLISLF (199 aa). Residues 27 to 47 traverse the membrane as a helical segment; it reads LWLLISSVVMGGLLAVILAVG. The Cytoplasmic segment spans residues 48-58; it reads RVSSNKFIRFP. Residues 59 to 79 traverse the membrane as a helical segment; the sequence is IWLFTYIFRGTPLYVQLLVFY. Over 80–104 the chain is Periplasmic; that stretch reads SGMYTLEIVKGTDLLNAFFRSGLNC. The chain crosses the membrane as a helical span at residues 105 to 125; sequence TVLALTLNTCAYTTEIFAGAI. At 126-157 the chain is on the cytoplasmic side; the sequence is RSVPHGEIEAARAYGFSSFKMYRCIILPSALR. A helical membrane pass occupies residues 158 to 178; the sequence is IALPAYSNEVILMLHSTALAF. Residues 179–199 are Periplasmic-facing; sequence TATVPDLLKIARDINSATYQP. A helical transmembrane segment spans residues 200 to 220; the sequence is FTAFGIAAVLYLLISYVLISL. Topologically, residues 221–235 are cytoplasmic; that stretch reads FRRAERRWLQHVSSK.

The protein belongs to the binding-protein-dependent transport system permease family. HisMQ subfamily. As to quaternary structure, the HisPMQJ complex is composed of two ATP-binding proteins (HisP), two transmembrane proteins (HisM and HisQ) and a solute-binding protein (HisJ). The HisPMQ-ArgT complex is composed of two ATP-binding proteins (HisP), two transmembrane proteins (HisM and HisQ) and a solute-binding protein (ArgT).

It is found in the cell inner membrane. Part of the ABC transporter complex HisPMQJ involved in histidine transport. Is also part of the ABC transporter complex HisPMQ-ArgT involved in lysine/arginine/ornithine transport. Probably responsible for the translocation of the substrate across the membrane. The polypeptide is Histidine/lysine/arginine/ornithine transport system permease protein HisM (hisM) (Salmonella typhi).